The primary structure comprises 454 residues: DNA-binding protein (454 aa).

Residues 1–41 (MSHKKVVAISESSSDEEVPVAPPTAPPKKRQRKAVEEPRGH) form a disordered region. Position 129 is a phosphotyrosine; by host (Tyr-129). Zn(2+)-binding residues include Cys-213 and His-215. Positions 226–260 (VEMDVNSENAQRALKENPEKTKIVSNRWGRNVVQF) are flexible loop. Zn(2+) contacts are provided by Cys-268, Cys-284, Cys-325, Cys-327, Cys-378, and Cys-394. The segment at 440–454 (TILPQGQHDDDLVLF) is C-terminal arm, DBP binding.

The protein belongs to the adenoviridae E2A DNA-binding protein family. Homomultimerizes on viral ssDNA bound to pTP. Forms a initiation complex with viral polymerase, pTP and hosts NFIA and POU2F1/OCT1. Interacts with host SRCAP.

The protein localises to the host nucleus. Functionally, plays a role in the elongation phase of viral strand displacement replication by unwinding the template in an ATP-independent fashion, employing its capacity to form multimers. Also enhances the rate of initiation. Released from template upon second strand synthesis. Assembles in complex with viral pTP, viral pol, host NFIA and host POU2F1/OCT1 on viral origin of replication. Covers the whole ssDNA genome during synthesis. The complementary strand synthesis induces its relese from DNA template. May inhibit cellular transcription mediated by the interaction between host SRCAP and CBP. The sequence is that of DNA-binding protein from Canine adenovirus serotype 1 (strain RI261) (CAdV-1).